The primary structure comprises 326 residues: D-threonate 4-phosphate dehydrogenase (326 aa).

Residues histidine 138 and threonine 139 each coordinate substrate. A divalent metal cation is bound by residues histidine 168, histidine 212, and histidine 267. Substrate contacts are provided by lysine 275, asparagine 284, and arginine 293.

This sequence belongs to the PdxA family. PdxA2 subfamily. Homodimer. The cofactor is a divalent metal cation.

It catalyses the reaction 4-O-phospho-D-threonate + NAD(+) = dihydroxyacetone phosphate + CO2 + NADH. In terms of biological role, catalyzes the NAD-dependent oxidation and subsequent decarboxylation of D-threonate 4-phosphate to produce dihydroxyacetone phosphate (DHAP). Can also use 4-hydroxy-L-threonine 4-phosphate as substrate. The chain is D-threonate 4-phosphate dehydrogenase from Pectobacterium atrosepticum (strain SCRI 1043 / ATCC BAA-672) (Erwinia carotovora subsp. atroseptica).